A 141-amino-acid polypeptide reads, in one-letter code: Large ribosomal subunit protein uL22 (141 aa).

The disordered stretch occupies residues 110-141 (EEKKTVAKKTTTTKAPAKKTTSTKKATVKKES). Residues 117-134 (KKTTTTKAPAKKTTSTKK) show a composition bias toward low complexity.

The protein belongs to the universal ribosomal protein uL22 family. In terms of assembly, part of the 50S ribosomal subunit.

Functionally, this protein binds specifically to 23S rRNA; its binding is stimulated by other ribosomal proteins, e.g. L4, L17, and L20. It is important during the early stages of 50S assembly. It makes multiple contacts with different domains of the 23S rRNA in the assembled 50S subunit and ribosome. Its function is as follows. The globular domain of the protein is located near the polypeptide exit tunnel on the outside of the subunit, while an extended beta-hairpin is found that lines the wall of the exit tunnel in the center of the 70S ribosome. This Campylobacter jejuni (strain RM1221) protein is Large ribosomal subunit protein uL22.